The primary structure comprises 224 residues: UPF0758 protein VV1_0825 (224 aa).

A disordered region spans residues 1–20 (MSLKNLPSESMPREKLLQRG). The MPN domain occupies 102–224 (ALTSPQHTKL…VVSFAERGWI (123 aa)). Histidine 173, histidine 175, and aspartate 186 together coordinate Zn(2+). A JAMM motif motif is present at residues 173–186 (HNHPSGVAEPSQAD).

Belongs to the UPF0758 family.

The protein is UPF0758 protein VV1_0825 of Vibrio vulnificus (strain CMCP6).